A 193-amino-acid polypeptide reads, in one-letter code: Probable type II restriction enzyme HpyAORF263P (193 aa).

Belongs to the BsaWI type II restriction endonuclease family.

The catalysed reaction is Endonucleolytic cleavage of DNA to give specific double-stranded fragments with terminal 5'-phosphates.. Its function is as follows. A P subtype probable restriction enzyme that recognizes the double-stranded sequence CCGG; the cleavage site is unknown. The chain is Probable type II restriction enzyme HpyAORF263P from Helicobacter pylori (strain ATCC 700392 / 26695) (Campylobacter pylori).